Consider the following 670-residue polypeptide: Putative segment polarity protein dishevelled homolog DVL1P1 (670 aa).

The region spanning M1–E85 is the DIX domain. The segment at S89–M240 is disordered. Residues S142–R151 show a composition bias toward basic residues. Over residues N152–V171 the composition is skewed to basic and acidic residues. Composition is skewed to low complexity over residues D176 to V192 and S201 to R214. Residues L215–L228 are compositionally biased toward basic residues. Positions T251–E323 constitute a PDZ domain. The 75-residue stretch at P400–D474 folds into the DEP domain. A disordered region spans residues P518–A642. Low complexity-rich tracts occupy residues P526–S553 and S600–P614.

The protein belongs to the DSH family. As to expression, expressed in thymus, heart, liver, kidney, brain, skeletal muscle, and pancreas.

Its subcellular location is the cytoplasm. In terms of biological role, may play a role in the signal transduction pathway mediated by multiple Wnt genes. The protein is Putative segment polarity protein dishevelled homolog DVL1P1 (DVL1P1) of Homo sapiens (Human).